The sequence spans 226 residues: Cytidylate kinase (226 aa).

An ATP-binding site is contributed by 12 to 20 (GPSGAGKGT).

The protein belongs to the cytidylate kinase family. Type 1 subfamily.

The protein localises to the cytoplasm. The enzyme catalyses CMP + ATP = CDP + ADP. The catalysed reaction is dCMP + ATP = dCDP + ADP. In Vibrio vulnificus (strain YJ016), this protein is Cytidylate kinase.